Consider the following 281-residue polypeptide: Digeranylgeranylglyceryl phosphate synthase (281 aa).

5 helical membrane passes run Ile-88 to Ile-108, Ala-132 to Leu-152, Gly-200 to Phe-220, Ile-225 to Ile-245, and Leu-261 to Val-281.

Belongs to the UbiA prenyltransferase family. DGGGP synthase subfamily. The cofactor is Mg(2+).

Its subcellular location is the cell membrane. The catalysed reaction is sn-3-O-(geranylgeranyl)glycerol 1-phosphate + (2E,6E,10E)-geranylgeranyl diphosphate = 2,3-bis-O-(geranylgeranyl)-sn-glycerol 1-phosphate + diphosphate. The protein operates within membrane lipid metabolism; glycerophospholipid metabolism. Prenyltransferase that catalyzes the transfer of the geranylgeranyl moiety of geranylgeranyl diphosphate (GGPP) to the C2 hydroxyl of (S)-3-O-geranylgeranylglyceryl phosphate (GGGP). This reaction is the second ether-bond-formation step in the biosynthesis of archaeal membrane lipids. This Korarchaeum cryptofilum (strain OPF8) protein is Digeranylgeranylglyceryl phosphate synthase.